Here is a 924-residue protein sequence, read N- to C-terminus: Isoleucine--tRNA ligase (924 aa).

The 'HIGH' region signature appears at 57–67; sequence PYANGDIHMGH. Glu552 serves as a coordination point for L-isoleucyl-5'-AMP. A 'KMSKS' region motif is present at residues 593–597; it reads KMSKS. Lys596 provides a ligand contact to ATP. Zn(2+)-binding residues include Cys891, Cys894, Cys911, and Cys914.

The protein belongs to the class-I aminoacyl-tRNA synthetase family. IleS type 1 subfamily. As to quaternary structure, monomer. Zn(2+) serves as cofactor.

The protein resides in the cytoplasm. The catalysed reaction is tRNA(Ile) + L-isoleucine + ATP = L-isoleucyl-tRNA(Ile) + AMP + diphosphate. Its function is as follows. Catalyzes the attachment of isoleucine to tRNA(Ile). As IleRS can inadvertently accommodate and process structurally similar amino acids such as valine, to avoid such errors it has two additional distinct tRNA(Ile)-dependent editing activities. One activity is designated as 'pretransfer' editing and involves the hydrolysis of activated Val-AMP. The other activity is designated 'posttransfer' editing and involves deacylation of mischarged Val-tRNA(Ile). The polypeptide is Isoleucine--tRNA ligase (Geobacillus thermodenitrificans (strain NG80-2)).